The following is a 121-amino-acid chain: Small ribosomal subunit protein uS13 (121 aa).

Residues 91 to 121 (HRRGLPVRGQNSKNNARTRKGPRRTVANKKK) are disordered. A compositionally biased stretch (basic residues) spans 106–121 (ARTRKGPRRTVANKKK).

The protein belongs to the universal ribosomal protein uS13 family. As to quaternary structure, part of the 30S ribosomal subunit. Forms a loose heterodimer with protein S19. Forms two bridges to the 50S subunit in the 70S ribosome.

Located at the top of the head of the 30S subunit, it contacts several helices of the 16S rRNA. In the 70S ribosome it contacts the 23S rRNA (bridge B1a) and protein L5 of the 50S subunit (bridge B1b), connecting the 2 subunits; these bridges are implicated in subunit movement. Contacts the tRNAs in the A and P-sites. This chain is Small ribosomal subunit protein uS13, found in Bacillus mycoides (strain KBAB4) (Bacillus weihenstephanensis).